The following is a 202-amino-acid chain: Large ribosomal subunit protein bL25 (202 aa).

The protein belongs to the bacterial ribosomal protein bL25 family. CTC subfamily. As to quaternary structure, part of the 50S ribosomal subunit; part of the 5S rRNA/L5/L18/L25 subcomplex. Contacts the 5S rRNA. Binds to the 5S rRNA independently of L5 and L18.

In terms of biological role, this is one of the proteins that binds to the 5S RNA in the ribosome where it forms part of the central protuberance. The polypeptide is Large ribosomal subunit protein bL25 (Nitrosomonas eutropha (strain DSM 101675 / C91 / Nm57)).